A 334-amino-acid chain; its full sequence is Glycerol-3-phosphate dehydrogenase [NAD(P)+] (334 aa).

NADPH-binding residues include S11, W12, R32, and K106. Residues K106 and G136 each coordinate sn-glycerol 3-phosphate. An NADPH-binding site is contributed by A140. The sn-glycerol 3-phosphate site is built by K191, D244, S254, R255, and N256. The active-site Proton acceptor is the K191. Residue R255 participates in NADPH binding. 2 residues coordinate NADPH: V279 and E281.

This sequence belongs to the NAD-dependent glycerol-3-phosphate dehydrogenase family.

The protein resides in the cytoplasm. It catalyses the reaction sn-glycerol 3-phosphate + NAD(+) = dihydroxyacetone phosphate + NADH + H(+). The enzyme catalyses sn-glycerol 3-phosphate + NADP(+) = dihydroxyacetone phosphate + NADPH + H(+). The protein operates within membrane lipid metabolism; glycerophospholipid metabolism. Its function is as follows. Catalyzes the reduction of the glycolytic intermediate dihydroxyacetone phosphate (DHAP) to sn-glycerol 3-phosphate (G3P), the key precursor for phospholipid synthesis. This Parafrankia sp. (strain EAN1pec) protein is Glycerol-3-phosphate dehydrogenase [NAD(P)+].